We begin with the raw amino-acid sequence, 301 residues long: Phosphatidylglycerol--prolipoprotein diacylglyceryl transferase (301 aa).

3 consecutive transmembrane segments (helical) span residues 17–37 (LAVR…IVVG), 59–79 (MLFY…VLFY), and 97–117 (GGMS…LFAY). Arg-142 serves as a coordination point for a 1,2-diacyl-sn-glycero-3-phospho-(1'-sn-glycerol). A run of 2 helical transmembrane segments spans residues 230-250 (MGAI…TVEF) and 265-285 (LSMG…LLVW).

It belongs to the Lgt family.

Its subcellular location is the cell inner membrane. It carries out the reaction L-cysteinyl-[prolipoprotein] + a 1,2-diacyl-sn-glycero-3-phospho-(1'-sn-glycerol) = an S-1,2-diacyl-sn-glyceryl-L-cysteinyl-[prolipoprotein] + sn-glycerol 1-phosphate + H(+). It functions in the pathway protein modification; lipoprotein biosynthesis (diacylglyceryl transfer). Functionally, catalyzes the transfer of the diacylglyceryl group from phosphatidylglycerol to the sulfhydryl group of the N-terminal cysteine of a prolipoprotein, the first step in the formation of mature lipoproteins. The chain is Phosphatidylglycerol--prolipoprotein diacylglyceryl transferase from Paraburkholderia xenovorans (strain LB400).